Consider the following 344-residue polypeptide: Heat-inducible transcription repressor HrcA (344 aa).

It belongs to the HrcA family.

In terms of biological role, negative regulator of class I heat shock genes (grpE-dnaK-dnaJ and groELS operons). Prevents heat-shock induction of these operons. The chain is Heat-inducible transcription repressor HrcA from Streptococcus mutans serotype c (strain ATCC 700610 / UA159).